We begin with the raw amino-acid sequence, 743 residues long: 1,4-alpha-glucan branching enzyme GlgB (743 aa).

The active-site Nucleophile is Asp416. Glu469 acts as the Proton donor in catalysis.

It belongs to the glycosyl hydrolase 13 family. GlgB subfamily. As to quaternary structure, monomer.

It catalyses the reaction Transfers a segment of a (1-&gt;4)-alpha-D-glucan chain to a primary hydroxy group in a similar glucan chain.. The protein operates within glycan biosynthesis; glycogen biosynthesis. In terms of biological role, catalyzes the formation of the alpha-1,6-glucosidic linkages in glycogen by scission of a 1,4-alpha-linked oligosaccharide from growing alpha-1,4-glucan chains and the subsequent attachment of the oligosaccharide to the alpha-1,6 position. This chain is 1,4-alpha-glucan branching enzyme GlgB, found in Shewanella baltica (strain OS155 / ATCC BAA-1091).